The primary structure comprises 164 residues: Cell division protein SepF (164 aa).

A disordered region spans residues 29-57; that stretch reads INKGRGASQQEYDEYYEDSTPTVTQKEDP.

Belongs to the SepF family. Homodimer. Interacts with FtsZ.

The protein localises to the cytoplasm. Its function is as follows. Cell division protein that is part of the divisome complex and is recruited early to the Z-ring. Probably stimulates Z-ring formation, perhaps through the cross-linking of FtsZ protofilaments. Its function overlaps with FtsA. The sequence is that of Cell division protein SepF from Exiguobacterium sibiricum (strain DSM 17290 / CCUG 55495 / CIP 109462 / JCM 13490 / 255-15).